The chain runs to 169 residues: Ubiquitin-fold modifier-conjugating enzyme 1 (169 aa).

Cys-116 (glycyl thioester intermediate) is an active-site residue.

It belongs to the ubiquitin-conjugating enzyme family. UFC1 subfamily.

Functionally, E2-like enzyme which forms an intermediate with UFM1 via a thioester linkage. In Nematostella vectensis (Starlet sea anemone), this protein is Ubiquitin-fold modifier-conjugating enzyme 1.